The sequence spans 441 residues: Ribosomal protein uS12 methylthiotransferase RimO (441 aa).

The region spanning 8–118 is the MTTase N-terminal domain; the sequence is PKIGFVSLGC…VLQHVHHYVP (111 aa). 6 residues coordinate [4Fe-4S] cluster: cysteine 17, cysteine 53, cysteine 82, cysteine 150, cysteine 154, and cysteine 157. One can recognise a Radical SAM core domain in the interval 136–373; that stretch reads LTPRHYAYLK…MQLQQQISAE (238 aa). In terms of domain architecture, TRAM spans 376 to 441; it reads QEKVGREILV…DEYDLWGSRV (66 aa).

It belongs to the methylthiotransferase family. RimO subfamily. [4Fe-4S] cluster serves as cofactor.

The protein resides in the cytoplasm. It carries out the reaction L-aspartate(89)-[ribosomal protein uS12]-hydrogen + (sulfur carrier)-SH + AH2 + 2 S-adenosyl-L-methionine = 3-methylsulfanyl-L-aspartate(89)-[ribosomal protein uS12]-hydrogen + (sulfur carrier)-H + 5'-deoxyadenosine + L-methionine + A + S-adenosyl-L-homocysteine + 2 H(+). Catalyzes the methylthiolation of an aspartic acid residue of ribosomal protein uS12. In Salmonella paratyphi B (strain ATCC BAA-1250 / SPB7), this protein is Ribosomal protein uS12 methylthiotransferase RimO.